The following is a 392-amino-acid chain: MSAVLKDPIPAPGRPESTRPEPRPGVLAIEAYVPGKSHAPGVEKVFKLSSNETPLGPSEKAVAAFAEAGRKLEDYPDGSATVLRQAIATAYGLDPARIICGAGSDEILNLVAHTYVGPGDEVIFSEHGFLVYKIATLASGGTPVVARERDLTADVDAILALVTPRTRLVFLANPNNPTGTYLPFDEVRRLHAGLPANVLLVLDAAYAEYVRRNDYETGLELALTADNVLMSRTFSKIHGLAALRIGWAVGPAHVIDAMNRVRGPFNMNTPALLAGAAAIADAAHVEKAVAHNARWLPWLTEQIEGLGLKVTPSVANFLLIHFPDTPGRTAKEADAFLMKRGLVLRQVASYGLPHALRMTVGTEEANHLVVAALADFMSGNSSAGQEAGGKDK.

The interval 1-24 is disordered; sequence MSAVLKDPIPAPGRPESTRPEPRP. Lys236 carries the post-translational modification N6-(pyridoxal phosphate)lysine.

It belongs to the class-II pyridoxal-phosphate-dependent aminotransferase family. Histidinol-phosphate aminotransferase subfamily. In terms of assembly, homodimer. Requires pyridoxal 5'-phosphate as cofactor.

It catalyses the reaction L-histidinol phosphate + 2-oxoglutarate = 3-(imidazol-4-yl)-2-oxopropyl phosphate + L-glutamate. It functions in the pathway amino-acid biosynthesis; L-histidine biosynthesis; L-histidine from 5-phospho-alpha-D-ribose 1-diphosphate: step 7/9. In Xanthobacter autotrophicus (strain ATCC BAA-1158 / Py2), this protein is Histidinol-phosphate aminotransferase.